Consider the following 312-residue polypeptide: Methionyl-tRNA formyltransferase (312 aa).

109–112 (SLLP) provides a ligand contact to (6S)-5,6,7,8-tetrahydrofolate.

The protein belongs to the Fmt family.

The catalysed reaction is L-methionyl-tRNA(fMet) + (6R)-10-formyltetrahydrofolate = N-formyl-L-methionyl-tRNA(fMet) + (6S)-5,6,7,8-tetrahydrofolate + H(+). Its function is as follows. Attaches a formyl group to the free amino group of methionyl-tRNA(fMet). The formyl group appears to play a dual role in the initiator identity of N-formylmethionyl-tRNA by promoting its recognition by IF2 and preventing the misappropriation of this tRNA by the elongation apparatus. This is Methionyl-tRNA formyltransferase from Anaeromyxobacter dehalogenans (strain 2CP-C).